The primary structure comprises 115 residues: MAIRVELLLAMVLLPLLLLESVVPHAAAEKVWVDRDNVYCGHLDCTRVATFKGERFCTLCDTRHFCECKETREPLPYMYACPGTEPCQSSDRLGSCSKSMHDVLCDRIDQAFLEQ.

An N-terminal signal peptide occupies residues 1 to 28 (MAIRVELLLAMVLLPLLLLESVVPHAAA).

Female saliva (at protein level). Distal-lateral lobes of female salivary gland (at protein level). Not detected in male salivary gland (at protein level).

Its subcellular location is the secreted. In terms of biological role, required for efficient probing and blood feeding. In Anopheles gambiae (African malaria mosquito), this protein is Salivary protein gSG6.